The chain runs to 360 residues: Peptide chain release factor 1 (360 aa).

Q235 carries the post-translational modification N5-methylglutamine. The disordered stretch occupies residues 284–312 (AKRQQAEASTRRNLLGSGDRSDRNRTYNF).

The protein belongs to the prokaryotic/mitochondrial release factor family. In terms of processing, methylated by PrmC. Methylation increases the termination efficiency of RF1.

The protein localises to the cytoplasm. Functionally, peptide chain release factor 1 directs the termination of translation in response to the peptide chain termination codons UAG and UAA. The protein is Peptide chain release factor 1 of Escherichia coli O81 (strain ED1a).